The following is a 938-amino-acid chain: Isoleucine--tRNA ligase (938 aa).

The short motif at 58–68 (PYANGSIHIGH) is the 'HIGH' region element. An N6-acetyllysine modification is found at Lys183. Glu561 contributes to the L-isoleucyl-5'-AMP binding site. The 'KMSKS' region signature appears at 602–606 (KMSKS). Residue Lys605 participates in ATP binding. 4 residues coordinate Zn(2+): Cys901, Cys904, Cys921, and Cys924.

Belongs to the class-I aminoacyl-tRNA synthetase family. IleS type 1 subfamily. As to quaternary structure, monomer. It depends on Zn(2+) as a cofactor.

The protein resides in the cytoplasm. The enzyme catalyses tRNA(Ile) + L-isoleucine + ATP = L-isoleucyl-tRNA(Ile) + AMP + diphosphate. Its function is as follows. Catalyzes the attachment of isoleucine to tRNA(Ile). As IleRS can inadvertently accommodate and process structurally similar amino acids such as valine, to avoid such errors it has two additional distinct tRNA(Ile)-dependent editing activities. One activity is designated as 'pretransfer' editing and involves the hydrolysis of activated Val-AMP. The other activity is designated 'posttransfer' editing and involves deacylation of mischarged Val-tRNA(Ile). This chain is Isoleucine--tRNA ligase, found in Shigella dysenteriae serotype 1 (strain Sd197).